A 286-amino-acid polypeptide reads, in one-letter code: Pantothenate synthetase (286 aa).

30-37 (MGNLHAGH) serves as a coordination point for ATP. The active-site Proton donor is the H37. Q61 is a binding site for (R)-pantoate. Q61 provides a ligand contact to beta-alanine. ATP is bound at residue 149-152 (GEKD). Residue Q155 participates in (R)-pantoate binding. Residues V178 and 186-189 (MSSR) each bind ATP.

The protein belongs to the pantothenate synthetase family. As to quaternary structure, homodimer.

The protein resides in the cytoplasm. The catalysed reaction is (R)-pantoate + beta-alanine + ATP = (R)-pantothenate + AMP + diphosphate + H(+). It participates in cofactor biosynthesis; (R)-pantothenate biosynthesis; (R)-pantothenate from (R)-pantoate and beta-alanine: step 1/1. Its function is as follows. Catalyzes the condensation of pantoate with beta-alanine in an ATP-dependent reaction via a pantoyl-adenylate intermediate. This is Pantothenate synthetase from Methylococcus capsulatus (strain ATCC 33009 / NCIMB 11132 / Bath).